Consider the following 448-residue polypeptide: Phosphoglucosamine mutase (448 aa).

S100 (phosphoserine intermediate) is an active-site residue. Positions 100, 240, 242, and 244 each coordinate Mg(2+). Position 100 is a phosphoserine (S100).

This sequence belongs to the phosphohexose mutase family. It depends on Mg(2+) as a cofactor. Post-translationally, activated by phosphorylation.

The catalysed reaction is alpha-D-glucosamine 1-phosphate = D-glucosamine 6-phosphate. Functionally, catalyzes the conversion of glucosamine-6-phosphate to glucosamine-1-phosphate. In Clostridium perfringens (strain SM101 / Type A), this protein is Phosphoglucosamine mutase.